The chain runs to 570 residues: Glycine--tRNA ligase (570 aa).

Residues Arg-95 and Glu-159 each coordinate substrate. ATP is bound by residues 191-193 (RNE), 201-206 (IRLREF), 312-313 (EV), and 426-429 (GLDR). 206–210 (FNQAE) contributes to the substrate binding site. 422–426 (EPSFG) contributes to the substrate binding site.

This sequence belongs to the class-II aminoacyl-tRNA synthetase family.

Its subcellular location is the cytoplasm. The catalysed reaction is tRNA(Gly) + glycine + ATP = glycyl-tRNA(Gly) + AMP + diphosphate. Functionally, catalyzes the attachment of glycine to tRNA(Gly). In Archaeoglobus fulgidus (strain ATCC 49558 / DSM 4304 / JCM 9628 / NBRC 100126 / VC-16), this protein is Glycine--tRNA ligase.